Reading from the N-terminus, the 310-residue chain is Mitogen-activated protein kinase kinase 9 (310 aa).

The 260-residue stretch at 47 to 306 (LEKLNVLGCG…APQLLAHPFL (260 aa)) folds into the Protein kinase domain. ATP contacts are provided by residues 53–61 (LGCGNGGIV) and lysine 76. Residue aspartate 167 is the Proton acceptor of the active site. Residues serine 195 and serine 201 each carry the phosphoserine modification. A Phosphothreonine modification is found at threonine 205.

It belongs to the protein kinase superfamily. STE Ser/Thr protein kinase family. MAP kinase kinase subfamily. Post-translationally, phosphorylation at Ser-195 and Ser-201 by MAP kinase kinase kinases positively regulates kinase activity. Autophosphorylated.

It is found in the cytoplasm. It localises to the nucleus. It catalyses the reaction L-seryl-[protein] + ATP = O-phospho-L-seryl-[protein] + ADP + H(+). It carries out the reaction L-threonyl-[protein] + ATP = O-phospho-L-threonyl-[protein] + ADP + H(+). The enzyme catalyses L-tyrosyl-[protein] + ATP = O-phospho-L-tyrosyl-[protein] + ADP + H(+). In terms of biological role, MKK9-MPK3/MPK6 module phosphorylates and activates EIN3, leading to the promotion of EIN3-mediated transcription in ethylene signaling. Autophosphorylates and also phosphorylates MPK3 and MPK6. Plays an important role in ethylene and camalexin biosynthesis and in salt stress response. MKK9-MPK6 module positively regulates leaf senescence. The sequence is that of Mitogen-activated protein kinase kinase 9 (MKK9) from Arabidopsis thaliana (Mouse-ear cress).